Consider the following 159-residue polypeptide: Protein-export protein SecB (159 aa).

This sequence belongs to the SecB family. Homotetramer, a dimer of dimers. One homotetramer interacts with 1 SecA dimer.

It is found in the cytoplasm. One of the proteins required for the normal export of preproteins out of the cell cytoplasm. It is a molecular chaperone that binds to a subset of precursor proteins, maintaining them in a translocation-competent state. It also specifically binds to its receptor SecA. The protein is Protein-export protein SecB of Burkholderia vietnamiensis (strain G4 / LMG 22486) (Burkholderia cepacia (strain R1808)).